The following is a 350-amino-acid chain: Ribosomal RNA large subunit methyltransferase M (350 aa).

Residues Ser-184, 217–220 (APGG), Asp-236, Asp-256, and Asp-272 each bind S-adenosyl-L-methionine. Lys-301 functions as the Proton acceptor in the catalytic mechanism.

It belongs to the class I-like SAM-binding methyltransferase superfamily. RNA methyltransferase RlmE family. RlmM subfamily. In terms of assembly, monomer.

Its subcellular location is the cytoplasm. The catalysed reaction is cytidine(2498) in 23S rRNA + S-adenosyl-L-methionine = 2'-O-methylcytidine(2498) in 23S rRNA + S-adenosyl-L-homocysteine + H(+). Its function is as follows. Catalyzes the 2'-O-methylation at nucleotide C2498 in 23S rRNA. This chain is Ribosomal RNA large subunit methyltransferase M, found in Marinomonas sp. (strain MWYL1).